A 150-amino-acid chain; its full sequence is MTTFLIKHKASGKFLHPYGGSSNPANNTKLVLHSDIHERMYFQFDVVDERWGYIKHVASGKIVHPYGGQANPPNETNMVLHQDRHDRALFAMDFFNDNIMHKGGKYIHPKGGSPNPPNNTETVIHGDKHAAMEFIFVSPKNKDKRVLVYA.

Residues H16 and G19 each coordinate D-galactose. An N-linked (GlcNAc...) asparagine glycan is attached at N26. D-galactose-binding positions include N27, 35–37, H64, and G67; that span reads DIH. N74 is a glycosylation site (N-linked (GlcNAc...) asparagine). D-galactose contacts are provided by residues E75, 83-85, H108, and G111; that span reads DRH. Residue N118 is glycosylated (N-linked (GlcNAc...) asparagine). Residues N119 and 127–129 each bind D-galactose; that span reads DKH.

In terms of assembly, monomer in solution. Homodimer in solution. Exists as a monomer in solution when a low concentration (0.001 mg/ml) of it is present. Homodimers start to appear at a concentration of 0.01 mg/ml and tetramers at a concentration of 0.1 mg/ml. In terms of tissue distribution, highly expressed in mantle and to a lesser extent in muscle, hepatopancreas, gill and hemocytes.

Its activity is regulated as follows. Bacterial binding activity is inhibited by D-galactose. Hemagglutinating activity is independent of divalent cations Ca2(+) or Mg2(+). It is strongly inhibited by N-acetyl-D-galactosamine (GalNAc), D-galactose and D-talose, and to a lesser extent by melibiose and raffinose. Also inhibited by glycoprotein asialo-bovine submaxillary mucin (BSM). Not inhibited by D-glucose, D-fucose, D-galactitol, N-acetyl-D-glucosamine or lactose. Fungal binding activity is inhibited by D-galactose. Cytotoxic activity against Raji cell line is completely inhibited by galactose, melibiose and raffinose, but not by glucose or lactose. Galactose inhibits binding to laminin and BSM, but not to collagen, gelatin or fibronectin. Its function is as follows. Galactose-binding lectin. Binds both alpha and beta anomer of galactose (Gal), but has a stronger interaction with the glycans having alpha Gal at the non-reducing end and binds beta Gal weakly only in highly branched glycans. Has high affinity to Galalpha1-4Galbeta1-4GlcNAc. Binds N-acetyl-2-deoxy-2-amino-galactose (2-deoxy-GalNAc). Binds N-acetylgalactosamine (GalNAc). Binds porcine stomach mucin (PSM) with high affinity. Binds galactosamine. Binds laminin, bovine submaxillary mucin (BSM), fibronectin, type I collagen and gelatin with a decreasing affinity, respectively. Has hemagglutinating activity towards human type A erythrocytes. Also hemagglutinates human type 0, B and AB erythrocytes as well as rabbit and mouse erythrocytes. Agglutinates both Gram-positive and Gram-negative bacteria including B.subtilis ATCC 6633, S.aureus ATCC 21027 and E.coli 3254, respectively. No agglutination activity towards Gram-positive S.amurskyense CMM 3673. Has bacteriostatic activity on S.amurskyense CMM 3673, B.subtilis ATCC 6633, S.aureus ATCC 21027 and E.coli 3254. However, has no agglutination nor bacteriostatic activity on Gram-negative C.scophthalmum CIP 104199 or A.troitsensis KMM 3674. Inhibits growth of fungi from the genera Aspergillus, Penicillium, Trichoderma and st. Mycelia. Inhibits germination of spores and hyphal growth of them. Has dose-dependent cytotoxic effect on the human globotriaosylceramide (Gb3)-expressing Burkitt's lymphoma (Raji) cell line. Binds to Gb3 in these cells leading to activation of caspase-9/3 and PARP. Has dose-dependent cytotoxic effect on the Gb3-expressing human MCF-7 breast cancer cell line. No cytotoxic effect on myelogenous leukemia K562 cell line, which does not express Gb3. Activates immune responses in mice and increases cytokine production of TNF-alpha, IL-6 and MCP-1 in the serum and the peritoneal lavage of mice. Induces TNF-alpha and IL-6 secretion in mouse RAW264.7 macrophages, mouse bone marrow-derived macrophages, human THP-1 macrophages, human peripheral blood mononuclear cells (PBMCs) and human blood monocyte-derived macrophages. TNF-alpha production in macrophages could not be inhibited by GalNAc, GalN or Gal, indicating that induced cytokine production is separate from its sugar binding activity. Increases intracellular reactive oxygen species levels, expression and phosphorylation of protein kinases PKC alpha/delta, expression of COX-2 and NF-kappaB, and activates the MAPK pathway by increasing the phosphorylation of ERK1/2, JNK1/2 and p38 in mouse RAW264.7 macrophages. Induces endotoxin tolerance in lipopolysaccharide(LPS)-activated macrophages by down-regulating IRAK2 expression, reducing JNK1/2 phosphorylation and NF-kappaB activation. Can slightly increase the bactericidal activity of RAW264.7 macrophages. Has DNA-binding activity. Recognizes pathogen-associated molecular patterns (PAMPs) and binds to LPS from E.coli, but has only little binding to beta-1,3-glucan from E.gracilis and peptidoglycan from S.aureus. Activates secretion of TNF-alpha and IFN-gamma by the human peripheral blood cells (HPBCs). May be involved in innate immunity acting as an antibacterial and antifungal agent involved in the recognition and clearance of pathogens. This is Galactose-binding lectin from Crenomytilus grayanus (Gray mussel).